The primary structure comprises 129 residues: Glycine cleavage system H protein (129 aa).

Positions 24-106 (SYTVGISEHA…FGDGWFFRVM (83 aa)) constitute a Lipoyl-binding domain. Lys65 carries the N6-lipoyllysine modification.

It belongs to the GcvH family. As to quaternary structure, the glycine cleavage system is composed of four proteins: P, T, L and H. Requires (R)-lipoate as cofactor.

The glycine cleavage system catalyzes the degradation of glycine. The H protein shuttles the methylamine group of glycine from the P protein to the T protein. The sequence is that of Glycine cleavage system H protein from Shewanella halifaxensis (strain HAW-EB4).